Here is a 368-residue protein sequence, read N- to C-terminus: Proline-rich protein 5-like (368 aa).

Phosphoserine is present on Ser28. The segment at Leu312–Ser368 is disordered. Polar residues predominate over residues Ala353–Ser368.

It belongs to the PROTOR family. In terms of assembly, interacts with the mammalian target of rapamycin complex 2 (mTORC2) which contains MTOR, MLST8, PRR5, RICTOR, MAPKAP1 and DEPTOR. Interacts with RFFL. Interacts (via C-terminus) with ZFP36 (via C-terminus); this interaction may accelerate ZFP36-mediated mRNA decay during stress. Interacts with RICTOR. In terms of processing, ubiquitinated. Ubiquitination by RFFL promotes proteasomal degradation of PRR5L thereby modifying the substrate-specific activity of the mTORC2 complex. Ubiquitination by RFFL is stimulated by LPA/lysophosphatidic acid.

Functionally, associates with the mTORC2 complex that regulates cellular processes including survival and organization of the cytoskeleton. Regulates the activity of the mTORC2 complex in a substrate-specific manner preventing for instance the specific phosphorylation of PKCs and thereby controlling cell migration. Plays a role in the stimulation of ZFP36-mediated mRNA decay of several ZFP36-associated mRNAs, such as TNF-alpha and GM-CSF, in response to stress. Required for ZFP36 localization to cytoplasmic stress granule (SG) and P-body (PB) in response to stress. This Bos taurus (Bovine) protein is Proline-rich protein 5-like (PRR5L).